A 509-amino-acid polypeptide reads, in one-letter code: ATP synthase subunit alpha (509 aa).

Residue 169-176 (GDRQTGKT) coordinates ATP.

This sequence belongs to the ATPase alpha/beta chains family. As to quaternary structure, F-type ATPases have 2 components, CF(1) - the catalytic core - and CF(0) - the membrane proton channel. CF(1) has five subunits: alpha(3), beta(3), gamma(1), delta(1), epsilon(1). CF(0) has three main subunits: a(1), b(2) and c(9-12). The alpha and beta chains form an alternating ring which encloses part of the gamma chain. CF(1) is attached to CF(0) by a central stalk formed by the gamma and epsilon chains, while a peripheral stalk is formed by the delta and b chains.

It localises to the cell inner membrane. It catalyses the reaction ATP + H2O + 4 H(+)(in) = ADP + phosphate + 5 H(+)(out). In terms of biological role, produces ATP from ADP in the presence of a proton gradient across the membrane. The alpha chain is a regulatory subunit. The protein is ATP synthase subunit alpha of Brucella canis (strain ATCC 23365 / NCTC 10854 / RM-666).